Reading from the N-terminus, the 157-residue chain is Ribosomal RNA large subunit methyltransferase H (157 aa).

S-adenosyl-L-methionine-binding positions include Gly-106 and 125–130 (LSEMTF).

This sequence belongs to the RNA methyltransferase RlmH family. As to quaternary structure, homodimer.

The protein resides in the cytoplasm. The catalysed reaction is pseudouridine(1915) in 23S rRNA + S-adenosyl-L-methionine = N(3)-methylpseudouridine(1915) in 23S rRNA + S-adenosyl-L-homocysteine + H(+). Functionally, specifically methylates the pseudouridine at position 1915 (m3Psi1915) in 23S rRNA. The chain is Ribosomal RNA large subunit methyltransferase H from Syntrophobacter fumaroxidans (strain DSM 10017 / MPOB).